An 85-amino-acid chain; its full sequence is uncharacterized protein (85 aa).

Residues 1 to 20 (MIKLFCVLAAFISINSACQS) form the signal peptide.

This is an uncharacterized protein from Invertebrate iridescent virus 6 (IIV-6).